A 136-amino-acid chain; its full sequence is Pterin-4-alpha-carbinolamine dehydratase 2 (136 aa).

Residues lysine 120, lysine 124, and lysine 131 each carry the N6-acetyllysine; alternate modification. Lysine 120, lysine 124, and lysine 131 each carry N6-succinyllysine; alternate.

The protein belongs to the pterin-4-alpha-carbinolamine dehydratase family. As to quaternary structure, homotetramer. Interacts with DYRK1B.

The enzyme catalyses (4aS,6R)-4a-hydroxy-L-erythro-5,6,7,8-tetrahydrobiopterin = (6R)-L-erythro-6,7-dihydrobiopterin + H2O. Its function is as follows. Involved in tetrahydrobiopterin biosynthesis. Seems to both prevent the formation of 7-pterins and accelerate the formation of quinonoid-BH2. In terms of biological role, regulates the dimerization of homeodomain protein HNF-1-alpha and enhances its transcriptional activity. In Mus musculus (Mouse), this protein is Pterin-4-alpha-carbinolamine dehydratase 2 (Pcbd2).